The following is a 332-amino-acid chain: MRVSYDELKNEFKRVLLDRQLTEELAEECATAFTDTTQAGAYSHGINRFPRFIQQLEQGDIVPNAIPTKVLSLGSIEQWDAHQAIGNLTAKKMMDRAIELASQHGVGVIALRNANHWMRGGSYGWQAAEKGYIGICWTNALAVMPPWGAKECRIGTNPLIIAVPTTPITMVDMSCSMYSYGMLEVHRLAGRQTFVDAGFDDEGNLTRDPSIVEKNRRLLPMGFWKGSGLSIVLDMIATLLSNGESTVAVTEDKNDEYCVSQVFIAIEVDRLIDGKSKDEKLNRIMDYVKTAERSDPTQAVRLPGHEFTTILSDNQTNGIPVDERVWAKLKTL.

His-44 acts as the Proton donor in catalysis. Residues 168–174, 224–225, and 304–306 contribute to the NAD(+) site; these read ITMVDMS, WK, and GHE.

Belongs to the LDH2/MDH2 oxidoreductase family. DlgD subfamily. Homodimer.

The protein localises to the cytoplasm. It carries out the reaction 3-dehydro-L-gulonate + NAD(+) = 2,3-dioxo-L-gulonate + NADH + H(+). The enzyme catalyses 3-dehydro-L-gulonate + NADP(+) = 2,3-dioxo-L-gulonate + NADPH + H(+). Catalyzes the reduction of 2,3-diketo-L-gulonate in the presence of NADH, to form 3-keto-L-gulonate. The polypeptide is 2,3-diketo-L-gulonate reductase (Haemophilus influenzae (strain ATCC 51907 / DSM 11121 / KW20 / Rd)).